The chain runs to 347 residues: Photosystem II protein D1 (347 aa).

Transmembrane regions (helical) follow at residues 32–49 (YIGW…LATV), 121–136 (HFIL…EWEF), and 145–159 (WIFV…AASA). His121 provides a ligand contact to chlorophyll a. Residue Tyr129 coordinates pheophytin a. 2 residues coordinate [CaMn4O5] cluster: Asp173 and Glu192. A helical membrane pass occupies residues 200-221 (FHILGVAAVFGGSLFSAMHGSL). His201 is a binding site for chlorophyll a. A quinone is bound by residues His218 and 267–268 (SF). A Fe cation-binding site is contributed by His218. His275 is a binding site for Fe cation. The helical transmembrane segment at 277 to 291 (FLAAWPVIGIWFTAL) threads the bilayer. 4 residues coordinate [CaMn4O5] cluster: His335, Glu336, Asp345, and Ala347.

It belongs to the reaction center PufL/M/PsbA/D family. In terms of assembly, PSII is composed of 1 copy each of membrane proteins PsbA, PsbB, PsbC, PsbD, PsbE, PsbF, PsbH, PsbI, PsbJ, PsbK, PsbL, PsbM, PsbT, PsbX, PsbY, PsbZ, Psb30/Ycf12, at least 3 peripheral proteins of the oxygen-evolving complex and a large number of cofactors. It forms dimeric complexes. The D1/D2 heterodimer binds P680, chlorophylls that are the primary electron donor of PSII, and subsequent electron acceptors. It shares a non-heme iron and each subunit binds pheophytin, quinone, additional chlorophylls, carotenoids and lipids. D1 provides most of the ligands for the Mn4-Ca-O5 cluster of the oxygen-evolving complex (OEC). There is also a Cl(-1) ion associated with D1 and D2, which is required for oxygen evolution. The PSII complex binds additional chlorophylls, carotenoids and specific lipids. is required as a cofactor. In terms of processing, tyr-164 forms a radical intermediate that is referred to as redox-active TyrZ, YZ or Y-Z.

It is found in the plastid. It localises to the chloroplast thylakoid membrane. The enzyme catalyses 2 a plastoquinone + 4 hnu + 2 H2O = 2 a plastoquinol + O2. In terms of biological role, photosystem II (PSII) is a light-driven water:plastoquinone oxidoreductase that uses light energy to abstract electrons from H(2)O, generating O(2) and a proton gradient subsequently used for ATP formation. It consists of a core antenna complex that captures photons, and an electron transfer chain that converts photonic excitation into a charge separation. The D1/D2 (PsbA/PsbD) reaction center heterodimer binds P680, the primary electron donor of PSII as well as several subsequent electron acceptors. The chain is Photosystem II protein D1 from Heterocapsa niei (Dinoflagellate).